Here is a 144-residue protein sequence, read N- to C-terminus: Glycophorin-A (144 aa).

The segment covering 1 to 25 (SSTTVPATHTSSSSLGPEQYVSSQS) has biased composition (polar residues). Residues 1–55 (SSTTVPATHTSSSSLGPEQYVSSQSNDKHTSDSHPTPTSAHEVTTEFSGRTHYPP) are disordered. Serine 2 is a glycosylation site (O-linked (GalNAc...) serine). 4 O-linked (GalNAc...) threonine glycosylation sites follow: threonine 3, threonine 4, threonine 8, and threonine 10. O-linked (GalNAc...) serine glycosylation is found at serine 11, serine 12, serine 13, serine 14, serine 22, and serine 23. O-linked (GalNAc...) threonine glycosylation is found at threonine 30, threonine 36, threonine 38, threonine 44, and threonine 45. Residues 33-48 (SHPTPTSAHEVTTEFS) show a composition bias toward polar residues. The O-linked (GalNAc...) serine glycan is linked to serine 48. An O-linked (GalNAc...) threonine glycan is attached at threonine 51. A helical membrane pass occupies residues 70–92 (LVIALIIFGVMAGVIGTILFISY). The segment at 101-144 (SESDVQPLPPPDAEVPLSSVEIEDPEETDELNSFTKPNQERNES) is disordered. Serine 118 carries the post-translational modification Phosphoserine. Acidic residues predominate over residues 121–130 (EIEDPEETDE).

Belongs to the glycophorin-A family. Homodimer. Component of the ankyrin-1 complex in the erythrocyte, composed of ANK1, RHCE, RHAG, SLC4A1, EPB42, GYPA, GYPB and AQP1. Interacts with SLC4A1; a GYPA monomer is bound at each end of the SLC4A1 dimer forming a heterotetramer.

Its subcellular location is the membrane. Functionally, component of the ankyrin-1 complex, a multiprotein complex involved in the stability and shape of the erythrocyte membrane. Glycophorin A is the major intrinsic membrane protein of the erythrocyte. The N-terminal glycosylated segment, which lies outside the erythrocyte membrane, has MN blood group receptors. Appears to be important for the function of SLC4A1 and is required for high activity of SLC4A1. May be involved in translocation of SLC4A1 to the plasma membrane. This chain is Glycophorin-A, found in Macaca fuscata fuscata (Japanese macaque).